The following is an 81-amino-acid chain: uncharacterized protein (81 aa).

Positions 46–81 (ASSPVVKRKSLVKRKSPVKRSPLKKRSQMRTSPCEA) are disordered. Positions 51 to 73 (VKRKSLVKRKSPVKRSPLKKRSQ) are enriched in basic residues.

This is an uncharacterized protein from Frog virus 3 (isolate Goorha) (FV-3).